A 458-amino-acid chain; its full sequence is Cysteine protease ATG4C (458 aa).

The residue at position 1 (M1) is an N-acetylmethionine. C111 acts as the Nucleophile in catalysis. Catalysis depends on residues D345 and H347. Residue S451 is modified to Phosphoserine. At T452 the chain carries Phosphothreonine.

This sequence belongs to the peptidase C54 family.

It localises to the cytoplasm. The catalysed reaction is [protein]-C-terminal L-amino acid-glycyl-phosphatidylethanolamide + H2O = [protein]-C-terminal L-amino acid-glycine + a 1,2-diacyl-sn-glycero-3-phosphoethanolamine. Its activity is regulated as follows. Inhibited by N-ethylmaleimide. Its function is as follows. Cysteine protease that plays a key role in autophagy by mediating both proteolytic activation and delipidation of ATG8 family proteins. The protease activity is required for proteolytic activation of ATG8 family proteins: cleaves the C-terminal amino acid of ATG8 proteins MAP1LC3 and GABARAPL2, to reveal a C-terminal glycine. Exposure of the glycine at the C-terminus is essential for ATG8 proteins conjugation to phosphatidylethanolamine (PE) and insertion to membranes, which is necessary for autophagy. In addition to the protease activity, also mediates delipidation of ATG8 family proteins. Catalyzes delipidation of PE-conjugated forms of ATG8 proteins during macroautophagy. Compared to ATG4B, the major protein for proteolytic activation of ATG8 proteins, shows weaker ability to cleave the C-terminal amino acid of ATG8 proteins, while it displays stronger delipidation activity. In contrast to other members of the family, weakly or not involved in phagophore growth during mitophagy. The polypeptide is Cysteine protease ATG4C (Homo sapiens (Human)).